A 466-amino-acid chain; its full sequence is Soluble pyridine nucleotide transhydrogenase (466 aa).

Residue 36–45 (ERYQNVGGGC) participates in FAD binding.

The protein belongs to the class-I pyridine nucleotide-disulfide oxidoreductase family. FAD serves as cofactor.

Its subcellular location is the cytoplasm. The catalysed reaction is NAD(+) + NADPH = NADH + NADP(+). In terms of biological role, conversion of NADPH, generated by peripheral catabolic pathways, to NADH, which can enter the respiratory chain for energy generation. The protein is Soluble pyridine nucleotide transhydrogenase of Escherichia coli O127:H6 (strain E2348/69 / EPEC).